Reading from the N-terminus, the 804-residue chain is Ral guanine nucleotide dissociation stimulator-like 1 (804 aa).

Residues 101–231 enclose the N-terminal Ras-GEF domain; that stretch reads KIRSIRAGTL…RAQSLLEQLR (131 aa). Positions 270-539 constitute a Ras-GEF domain; sequence EVDLVAEQLT…YVLSCEVEGL (270 aa). Disordered stretches follow at residues 564–611 and 640–676; these read NDST…TPTH and SASISLASPTLPGPPCNHRRSISLTPLMSPTSPGFPP. 2 stretches are compositionally biased toward low complexity: residues 581–607 and 640–649; these read PTGSSGESMDSVSVSSSDSSPSESDGM and SASISLASPT. Residues 661–671 are compositionally biased toward polar residues; that stretch reads ISLTPLMSPTS. The Ras-associating domain occupies 684–771; it reads DACIIRVSLE…FDFLLRLRGS (88 aa).

Functionally, probable guanine nucleotide exchange factor. The chain is Ral guanine nucleotide dissociation stimulator-like 1 (rgl1) from Danio rerio (Zebrafish).